The chain runs to 138 residues: Ribosome-binding factor A (138 aa).

It belongs to the RbfA family. Monomer. Binds 30S ribosomal subunits, but not 50S ribosomal subunits or 70S ribosomes.

It localises to the cytoplasm. Functionally, one of several proteins that assist in the late maturation steps of the functional core of the 30S ribosomal subunit. Associates with free 30S ribosomal subunits (but not with 30S subunits that are part of 70S ribosomes or polysomes). Required for efficient processing of 16S rRNA. May interact with the 5'-terminal helix region of 16S rRNA. This is Ribosome-binding factor A from Pseudoalteromonas atlantica (strain T6c / ATCC BAA-1087).